Here is a 476-residue protein sequence, read N- to C-terminus: Probable cytosolic Fe-S cluster assembly factor GJ13047 (476 aa).

Positions 23, 68, 71, 74, 187, 243, 395, and 399 each coordinate [4Fe-4S] cluster.

This sequence belongs to the NARF family.

In terms of biological role, component of the cytosolic iron-sulfur (Fe/S) protein assembly machinery. Required for maturation of extramitochondrial Fe/S proteins. This Drosophila virilis (Fruit fly) protein is Probable cytosolic Fe-S cluster assembly factor GJ13047.